We begin with the raw amino-acid sequence, 505 residues long: Lysine--tRNA ligase 1 (505 aa).

Positions 415 and 422 each coordinate Mg(2+).

Belongs to the class-II aminoacyl-tRNA synthetase family. Homodimer. It depends on Mg(2+) as a cofactor.

It localises to the cytoplasm. The enzyme catalyses tRNA(Lys) + L-lysine + ATP = L-lysyl-tRNA(Lys) + AMP + diphosphate. In Mycobacterium bovis (strain ATCC BAA-935 / AF2122/97), this protein is Lysine--tRNA ligase 1 (lysS1).